Reading from the N-terminus, the 397-residue chain is Subtilisin-like serine protease Pen c 1 (397 aa).

The N-terminal stretch at Met-1–Ala-19 is a signal peptide. A propeptide spans Gly-20–Thr-115 (removed in mature form). The Inhibitor I9 domain maps to Ser-35–Asn-113. The Peptidase S8 domain maps to Ser-125–Val-397. Residues Asp-157, His-188, and Ser-343 each act as charge relay system in the active site.

The protein belongs to the peptidase S8 family.

The protein localises to the secreted. With respect to regulation, inhibited by 0.1 mM diisopropyl fluorophosphate (DFP), phenylmethanesulfonyl fluoride (PMSF), chymostatin and elastatinal. Not inhibited by N-alpha-p-tosyl-L-lysine chloromethylketone (TLCK), N-tosyl-L-phenylalanyl chloromethyl ketone (TPCK) or N-carbobenzoxy-L-phenylalanine chloromethylketone (ZPCK). In terms of biological role, serine protease. Hydrolyzes azocasein. Cleaves peptide bonds of the oxidized insulin B chain preferably at 15-Leu-|-Tyr-16, but also at 4-Gln-|-His-5 and 24-Phe-|-Phe-25, and to a lesser extent at 5-His-|-Leu-6 and 25-Phe-|-Tyr-26. Hydrolyzes amide bonds between amino acids and 7-amino-4-methylcoumarin (AMC) in vitro. The protein is Subtilisin-like serine protease Pen c 1 of Penicillium citrinum.